The primary structure comprises 1334 residues: Nck-associated protein 5-like (1334 aa).

Disordered regions lie at residues 1–28, 115–146, 210–234, 266–316, and 349–711; these read MSEAMDQPAGGPGNPRPGEGDDGSMEPG, LPQIPLTPLQPPSEPPASPSLSSTEGPAAPLP, TPWRPPGQGPGSPEPINGELCGPPQ, GEED…SPDT, and PLNG…MVPS. The segment at 1 to 139 is mediates interaction with CDK5RAP2 and is required for homodimerization and microtubule bundle formation; it reads MSEAMDQPAG…PASPSLSSTE (139 aa). Residues 28-106 adopt a coiled-coil conformation; it reads GTCQELLHRL…NQMLSALFQQ (79 aa). Residues 122-132 are compositionally biased toward pro residues; the sequence is PLQPPSEPPAS. The span at 358 to 372 shows a compositional bias: polar residues; the sequence is GQSSSPDQAPPQLSK. S440, S451, S470, and S477 each carry phosphoserine; by CDK1. Low complexity predominate over residues 468–481; that stretch reads SPSPGGPQLSPQLP. The short motif at 484–487 is the (S/T)X(I/L)P motif 1 element; sequence SRIP. Phosphoserine occurs at positions 493, 496, and 498. A compositionally biased stretch (polar residues) spans 519–547; the sequence is LPTSPSPCYTTPDSTQLRPPQSALSTTLS. Residues S571 and S577 each carry the phosphoserine; by CDK1 modification. Positions 638 to 649 are enriched in polar residues; the sequence is PGNSSKKPSQGS. A Phosphothreonine modification is found at T659. Residues 750–1146 form a mediates interaction with beta-tubulin and is required for microtubule bundle formation region; it reads RVYSSHSMGA…SGTPSKNLPK (397 aa). The residue at position 767 (S767) is a Phosphoserine; by CDK1. The segment at 782-884 is disordered; the sequence is LAGALCPQVP…EGLAPHSAIE (103 aa). Low complexity predominate over residues 810–825; sequence SPHSSPTKLPSKSPTK. Positions 816–819 match the (S/T)X(I/L)P motif 2 motif; that stretch reads TKLP. The (S/T)X(I/L)P motif 3; required for interaction with MAPRE1 signature appears at 926–929; the sequence is SKLP. 3 disordered regions span residues 931–953, 986–1015, and 1030–1183; these read LNRRTEATKNKEGAGGGSPLRRE, KAYLSSRARPRPGGPAPGPNTGLGQVQGQL, and LNRV…VPGI. Residues 933 to 942 are compositionally biased toward basic and acidic residues; it reads RRTEATKNKE. Residues 956-994 adopt a coiled-coil conformation; that stretch reads MEARKLEAESLNISKLMAKAEDLRRALEEEKAYLSSRAR. Residues 1033–1050 are compositionally biased toward basic and acidic residues; that stretch reads VDGKELPSKSWREPKPEY. Residues 1079–1090 are compositionally biased toward low complexity; the sequence is GCGKPPGKPSSE. Residues 1110–1122 show a composition bias toward polar residues; that stretch reads SHFTACGSLTRTL. The segment covering 1152–1167 has biased composition (pro residues); it reads LDPPPGVPPARPPPLT. At S1194 the chain carries Phosphoserine. Over residues 1197 to 1206 the composition is skewed to low complexity; sequence AFPALLPAAP. The disordered stretch occupies residues 1197-1334; sequence AFPALLPAAP…DSLSSCGSQG (138 aa). The segment covering 1235–1247 has biased composition (polar residues); sequence TFPNTRAAGSSSD. A compositionally biased stretch (low complexity) spans 1313–1334; that stretch reads LETSESLSDSLYDSLSSCGSQG.

In terms of assembly, homodimer. Interacts with CDK5RAP2. Interacts with MAPRE1. Interacts with beta-tubulin. Post-translationally, CDK1/Cyclin B-dependent phosphorylation mediates its dissociation from centrosomes during mitosis.

Its subcellular location is the cytoplasm. It is found in the cytoskeleton. It localises to the microtubule organizing center. The protein localises to the centrosome. Its function is as follows. Regulates microtubule organization and stabilization. Promotes microtubule growth and bundling formation and stabilizes microtubules by increasing intense acetylation of microtubules. Both tubulin-binding and homodimer formation are required for NCKAP5L-mediated microtubule bundle formation. This Homo sapiens (Human) protein is Nck-associated protein 5-like.